The primary structure comprises 2028 residues: Pecanex-like protein 3 (2028 aa).

The next 2 membrane-spanning stretches (helical) occupy residues 33 to 53 (CFHL…YMVL) and 54 to 74 (PPSL…FATI). Residue Asn95 is glycosylated (N-linked (GlcNAc...) asparagine). The disordered stretch occupies residues 96-116 (STMGEQEEEAAQGESSLPRDP). Position 127 is a phosphoserine (Ser127). Thr129 carries the phosphothreonine modification. Disordered stretches follow at residues 193 to 239 (IGDL…PMSP) and 263 to 625 (LVRT…SHSR). The segment covering 198-208 (QTPPGVVPDPS) has biased composition (pro residues). Basic and acidic residues-rich tracts occupy residues 263–273 (LVRTSSRREQC) and 305–319 (TDRE…EKTN). Asn319 is a glycosylation site (N-linked (GlcNAc...) asparagine). Thr370 bears the Phosphothreonine mark. Ser392 and Ser431 each carry phosphoserine. Over residues 427–437 (GSELSPASSLR) the composition is skewed to polar residues. The segment covering 444 to 459 (TDSSSSTSCYSPESSQ) has biased composition (low complexity). The segment covering 488–497 (TQRTPSTASA) has biased composition (polar residues). Phosphoserine occurs at positions 505 and 521. The next 7 helical transmembrane spans lie at 793–815 (NIFG…LKGF), 819–836 (IWVF…YSLL), 852–872 (WVIA…IWLL), 880–900 (PFPP…FFCA), 903–923 (VATV…LPQV), 946–968 (SPLT…YGFC), and 980–1000 (HVPV…YHLS). Ser1025 carries the phosphoserine modification. Transmembrane regions (helical) follow at residues 1053 to 1073 (LVMC…TVFI), 1078 to 1098 (VLGF…HYLL), 1244 to 1264 (FVLT…HAFA), and 1280 to 1300 (LLSG…VFIM). Ser1697 is modified (phosphoserine). N-linked (GlcNAc...) asparagine glycosylation occurs at Asn1770. A disordered region spans residues 1845-2028 (GLTSLSNHPP…AAQPLLEHQY (184 aa)). Pro residues predominate over residues 1890–1921 (RPPPLLQWPPPRLPGPPPASPAPTEGPRPSRP). Phosphoserine occurs at positions 1909 and 1955. The segment covering 1966–1977 (PLDLSLSPDVSS) has biased composition (low complexity). The segment covering 1978–1987 (EASPARTTQD) has biased composition (polar residues).

This sequence belongs to the pecanex family.

Its subcellular location is the membrane. The chain is Pecanex-like protein 3 from Mus musculus (Mouse).